The primary structure comprises 167 residues: Endoribonuclease YbeY (167 aa).

Zn(2+) contacts are provided by His-131, His-135, and His-141.

It belongs to the endoribonuclease YbeY family. Zn(2+) is required as a cofactor.

The protein localises to the cytoplasm. In terms of biological role, single strand-specific metallo-endoribonuclease involved in late-stage 70S ribosome quality control and in maturation of the 3' terminus of the 16S rRNA. This is Endoribonuclease YbeY from Rickettsia rickettsii (strain Sheila Smith).